We begin with the raw amino-acid sequence, 593 residues long: Elongation factor 4 (593 aa).

One can recognise a tr-type G domain in the interval 2–181; it reads DKIRNFCIIA…AVIERIPHPQ (180 aa). GTP-binding positions include 14–19 and 128–131; these read DHGKST and NKCD.

Belongs to the TRAFAC class translation factor GTPase superfamily. Classic translation factor GTPase family. LepA subfamily.

The protein resides in the cell inner membrane. The enzyme catalyses GTP + H2O = GDP + phosphate + H(+). In terms of biological role, required for accurate and efficient protein synthesis under certain stress conditions. May act as a fidelity factor of the translation reaction, by catalyzing a one-codon backward translocation of tRNAs on improperly translocated ribosomes. Back-translocation proceeds from a post-translocation (POST) complex to a pre-translocation (PRE) complex, thus giving elongation factor G a second chance to translocate the tRNAs correctly. Binds to ribosomes in a GTP-dependent manner. The polypeptide is Elongation factor 4 (Bacteroides fragilis (strain ATCC 25285 / DSM 2151 / CCUG 4856 / JCM 11019 / LMG 10263 / NCTC 9343 / Onslow / VPI 2553 / EN-2)).